Consider the following 630-residue polypeptide: Auxin efflux carrier component 2 (630 aa).

Over 1 to 6 the chain is Extracellular; it reads MITGRD. The helical transmembrane segment at 7–27 threads the bilayer; the sequence is IYDVLAAIVPLYVAMFLAYGS. Over 28-38 the chain is Cytoplasmic; that stretch reads VRWWGIFTPDQ. A helical membrane pass occupies residues 39-59; it reads CSGINRFVAVFAVPLLSFHFI. Residue Val51 coordinates (indol-3-yl)acetate. The Extracellular segment spans residues 60-70; sequence STNDPYSMNYR. A helical membrane pass occupies residues 71 to 91; it reads FLAADSLQKLVILAALAVWHN. Over 92–108 the chain is Cytoplasmic; the sequence is LLSRYRRNGGAAASLDW. A helical transmembrane segment spans residues 109–129; that stretch reads TITLFSLSTLPNTLVMGIPLL. Positions 120 and 122 each coordinate (indol-3-yl)acetate. Residues 130–139 lie on the Extracellular side of the membrane; sequence RAMYGDFSGS. A helical transmembrane segment spans residues 140-160; it reads LMVQIVVLQSVIWYTLMLFLF. Tyr153 lines the (indol-3-yl)acetate pocket. Residues 161–490 are Cytoplasmic-facing; sequence EYRGAKALIS…LIRNPNTYSS (330 aa). The disordered stretch occupies residues 317-350; sequence ASGKAADPPSYPAPNPGMMPAPRKKELGGSNSNS. The span at 325–335 shows a compositional bias: pro residues; that stretch reads PSYPAPNPGMM. A helical transmembrane segment spans residues 491–511; that stretch reads LIGLVWSLVSFRWNIQMPSII. Topologically, residues 512–514 are extracellular; it reads KGS. A helical membrane pass occupies residues 515 to 535; that stretch reads ISILSDAGLGMAMFSLGLFMA. The Cytoplasmic portion of the chain corresponds to 536 to 549; that stretch reads LQPKIISCGKTVAT. Residues 550–570 form a helical membrane-spanning segment; the sequence is FAMAVRFLTGPAVIAATSIAI. The Extracellular portion of the chain corresponds to 571–574; the sequence is GLRG. A helical membrane pass occupies residues 575 to 595; that stretch reads VLLHVAIVQAALPQGIVPFVF. (indol-3-yl)acetate contacts are provided by Ile590 and Val591. At 596–609 the chain is on the cytoplasmic side; that stretch reads AKEYNCHPQILSTA. Residues 610–630 traverse the membrane as a helical segment; the sequence is VIFGMLIALPITILYYVLLGI.

The protein belongs to the auxin efflux carrier (TC 2.A.69.1) family. As to quaternary structure, homodimer. Expressed in roots, leaves, shoot apex and panicles. Expressed in roots, stem bases and young panicles.

The protein resides in the membrane. In terms of biological role, acts as a component of the auxin efflux carrier. Involved in the basipetal polar auxin transport which contributes to the spreading growth of the tillers. The chain is Auxin efflux carrier component 2 from Oryza sativa subsp. japonica (Rice).